A 150-amino-acid chain; its full sequence is uncharacterized protein (150 aa).

Belongs to the aspartate/glutamate racemases family.

This is an uncharacterized protein from Pectobacterium carotovorum subsp. carotovorum (Erwinia carotovora subsp. carotovora).